The sequence spans 360 residues: Pyrimidine monooxygenase RutA (360 aa).

FMN-binding positions include 49-50 (IK), Asn-115, Glu-124, 140-141 (RY), and Ser-190.

The protein belongs to the NtaA/SnaA/DszA monooxygenase family. RutA subfamily.

It carries out the reaction uracil + FMNH2 + NADH + O2 = (Z)-3-ureidoacrylate + FMN + NAD(+) + H2O + H(+). The catalysed reaction is thymine + FMNH2 + NADH + O2 = (Z)-2-methylureidoacrylate + FMN + NAD(+) + H2O + H(+). Its function is as follows. Catalyzes the pyrimidine ring opening between N-3 and C-4 by an unusual flavin hydroperoxide-catalyzed mechanism, adding oxygen atoms in the process to yield ureidoacrylate peracid, that immediately reacts with FMN forming ureidoacrylate and FMN-N(5)-oxide. The FMN-N(5)-oxide reacts spontaneously with NADH to produce FMN. Requires the flavin reductase RutF to regenerate FMN in vivo. The chain is Pyrimidine monooxygenase RutA from Pseudomonas savastanoi pv. phaseolicola (strain 1448A / Race 6) (Pseudomonas syringae pv. phaseolicola (strain 1448A / Race 6)).